A 132-amino-acid chain; its full sequence is Small ribosomal subunit protein uS8 (132 aa).

The protein belongs to the universal ribosomal protein uS8 family. As to quaternary structure, part of the 30S ribosomal subunit. Contacts proteins S5 and S12.

In terms of biological role, one of the primary rRNA binding proteins, it binds directly to 16S rRNA central domain where it helps coordinate assembly of the platform of the 30S subunit. The protein is Small ribosomal subunit protein uS8 of Caulobacter vibrioides (strain ATCC 19089 / CIP 103742 / CB 15) (Caulobacter crescentus).